The sequence spans 109 residues: MNGLVDSSRDKKMKNPRFSFRTKSDADILDDGYRWRKYGQKSVKNSLYPRSYYRCTQHMCNVKKQVQRLSKETSIVETTYEGIHNHPCEELMQTLTPLLHQLQFLSKFT.

The WRKY DNA-binding region spans 24–89 (SDADILDDGY…YEGIHNHPCE (66 aa)).

This sequence belongs to the WRKY group II-c family.

The protein localises to the nucleus. Transcription factor. Interacts specifically with the W box (5'-(T)TGAC[CT]-3'), a frequently occurring elicitor-responsive cis-acting element. This Arabidopsis thaliana (Mouse-ear cress) protein is Probable WRKY transcription factor 43 (WRKY43).